The following is a 492-amino-acid chain: MDPYRHRPSSAFNAPFWTTNSGAPVWNNNSSMTVGPRGPILLEDYHLVEKLANFDRERIPERVVHARGASAKGFFEVTHDITNLSCADFLRAPGVQTPVIVRFSTVIHERGSPETLRDPRGFAVKFYTREGNFDLVGNNFPVFFIRDGMKFTRHVHPLKPNPKSHIQENWRILDFFSHHPESLNMFSFLFDDIGIPQDYRHMDGSGVNTYTLINKAGKAHYVKFHWRPTCGVKSLLEEDAIRVGGSNHSHATQDLYDSIAAGNYPEWKLFIQTIDPDHEDKYDFDPLDVTKTWPEDILPLQPVGRMVLNKNIDNFFAENEQLAFCPAIIVPGVYYSDDKLLQTRIFSYADTQRHRLGPNYLQLPANAPKCAHHNNHHEGFMNFMHRDEEVNYFPSRFDPSRHAERYPHPPAVCSGKRERCIIEKENNFKEPGERYRSWTPDRQERFVRRWVDALSDTRVTHEIRSIWISYWSQADRSLGQKLASHLNVRPSI.

Catalysis depends on residues H65 and N138. Y348 is a binding site for heme.

This sequence belongs to the catalase family. In terms of assembly, homotetramer. Requires heme as cofactor. High expression in seeds and early seedlings.

Its subcellular location is the glyoxysome. The enzyme catalyses 2 H2O2 = O2 + 2 H2O. Its function is as follows. Occurs in almost all aerobically respiring organisms and serves to protect cells from the toxic effects of hydrogen peroxide. The protein is Catalase isozyme 1 (CAT1) of Cucurbita pepo (Vegetable marrow).